Reading from the N-terminus, the 162-residue chain is Interleukin-15 (162 aa).

Residues 1–29 (MRISKPHLRSVSIQCYLCLLLNSHFLTEA) form the signal peptide. Positions 30–48 (GIHVFILGCFSAGLPKTEA) are excised as a propeptide. Disulfide bonds link Cys-83–Cys-133 and Cys-90–Cys-136. N-linked (GlcNAc...) asparagine glycosylation is present at Asn-127.

It belongs to the IL-15/IL-21 family.

The protein localises to the secreted. Its function is as follows. Cytokine that plays a major role in the development of inflammatory and protective immune responses to microbial invaders and parasites by modulating immune cells of both the innate and adaptive immune systems. Stimulates the proliferation of natural killer cells, T-cells and B-cells and promotes the secretion of several cytokines. In monocytes, induces the production of IL8 and monocyte chemotactic protein 1/CCL2, two chemokines that attract neutrophils and monocytes respectively to sites of infection. Unlike most cytokines, which are secreted in soluble form, IL15 is expressed in association with its high affinity IL15RA on the surface of IL15-producing cells and delivers signals to target cells that express IL2RB and IL2RG receptor subunits. Binding to its receptor triggers the phosphorylation of JAK1 and JAK3 and the recruitment and subsequent phosphorylation of signal transducer and activator of transcription-3/STAT3 and STAT5. In mast cells, induces the rapid tyrosine phosphorylation of STAT6 and thereby controls mast cell survival and release of cytokines such as IL4. This is Interleukin-15 (IL15) from Macaca mulatta (Rhesus macaque).